We begin with the raw amino-acid sequence, 728 residues long: Polyribonucleotide nucleotidyltransferase (728 aa).

The Mg(2+) site is built by aspartate 509 and aspartate 515. The 63-residue stretch at 576-638 (TKIYTFYIPK…TKLKIAILKI (63 aa)) folds into the KH domain. In terms of domain architecture, S1 motif spans 648-715 (GTIYKAKVKN…KFRKIKLSHK (68 aa)).

Belongs to the polyribonucleotide nucleotidyltransferase family. Mg(2+) is required as a cofactor.

Its subcellular location is the cytoplasm. The enzyme catalyses RNA(n+1) + phosphate = RNA(n) + a ribonucleoside 5'-diphosphate. Involved in mRNA degradation. Catalyzes the phosphorolysis of single-stranded polyribonucleotides processively in the 3'- to 5'-direction. This chain is Polyribonucleotide nucleotidyltransferase, found in Karelsulcia muelleri (strain GWSS) (Sulcia muelleri).